The chain runs to 1266 residues: Kinesin-like protein KIN-12G (1266 aa).

A disordered region spans residues 1–22 (MPSDCGDDDHGGGSAPAGFELQ). Residues 32–369 (NVQVVIRVRP…LKFAQRAKYI (338 aa)) form the Kinesin motor domain. An ATP-binding site is contributed by 113-120 (GQTGSGKT). 4 coiled-coil regions span residues 613–668 (MEFI…SEAV), 817–854 (RSEL…FKRK), 1029–1060 (ARES…AERV), and 1084–1120 (SELL…MNRH).

This sequence belongs to the TRAFAC class myosin-kinesin ATPase superfamily. Kinesin family. KIN-12 subfamily.

The protein is Kinesin-like protein KIN-12G of Oryza sativa subsp. japonica (Rice).